Consider the following 514-residue polypeptide: 2,3-bisphosphoglycerate-independent phosphoglycerate mutase (514 aa).

Mn(2+)-binding residues include Asp13 and Ser69. Residue Ser69 is the Phosphoserine intermediate of the active site. Residues His128, 158 to 159, Arg189, Arg195, 263 to 266, and Lys336 each bind substrate; these read RD and RADR. Positions 402, 406, 443, 444, and 461 each coordinate Mn(2+).

It belongs to the BPG-independent phosphoglycerate mutase family. In terms of assembly, monomer. Mn(2+) serves as cofactor.

It carries out the reaction (2R)-2-phosphoglycerate = (2R)-3-phosphoglycerate. It participates in carbohydrate degradation; glycolysis; pyruvate from D-glyceraldehyde 3-phosphate: step 3/5. In terms of biological role, catalyzes the interconversion of 2-phosphoglycerate and 3-phosphoglycerate. In Akkermansia muciniphila (strain ATCC BAA-835 / DSM 22959 / JCM 33894 / BCRC 81048 / CCUG 64013 / CIP 107961 / Muc), this protein is 2,3-bisphosphoglycerate-independent phosphoglycerate mutase.